A 146-amino-acid polypeptide reads, in one-letter code: Flavodoxin (146 aa).

Residues 4–143 form the Flavodoxin-like domain; sequence ALIVYGSTTG…EVLDWAREVL (140 aa).

Belongs to the flavodoxin family. It depends on FMN as a cofactor.

Functionally, electron-transfer proteins that function in various electron transport systems in microorganisms. Functionally interchangeable with ferredoxin. The polypeptide is Flavodoxin (Megalodesulfovibrio gigas (strain ATCC 19364 / DSM 1382 / NCIMB 9332 / VKM B-1759) (Desulfovibrio gigas)).